The following is a 188-amino-acid chain: MTNVIKYLAEGEALPLEDHPSVLLPASYDIVWSLVVFIIVLILFWKFVRPKYQEVLTEREDRIKGGIQRAEAAQAEAKAALEKYNAQLAEARAEAAEIREEARAKGKQIEAEMKAKATEESNRIIESGEKQLAAQREQVVTELRREMGQNSISLAERLLGDQLSDDVKRSGTIDKFLAELDTVSPAGK.

A helical transmembrane segment spans residues 24 to 44 (LPASYDIVWSLVVFIIVLILF).

It belongs to the ATPase B chain family. F-type ATPases have 2 components, F(1) - the catalytic core - and F(0) - the membrane proton channel. F(1) has five subunits: alpha(3), beta(3), gamma(1), delta(1), epsilon(1). F(0) has three main subunits: a(1), b(2) and c(10-14). The alpha and beta chains form an alternating ring which encloses part of the gamma chain. F(1) is attached to F(0) by a central stalk formed by the gamma and epsilon chains, while a peripheral stalk is formed by the delta and b chains.

It localises to the cell membrane. F(1)F(0) ATP synthase produces ATP from ADP in the presence of a proton or sodium gradient. F-type ATPases consist of two structural domains, F(1) containing the extramembraneous catalytic core and F(0) containing the membrane proton channel, linked together by a central stalk and a peripheral stalk. During catalysis, ATP synthesis in the catalytic domain of F(1) is coupled via a rotary mechanism of the central stalk subunits to proton translocation. Functionally, component of the F(0) channel, it forms part of the peripheral stalk, linking F(1) to F(0). This is ATP synthase subunit b from Corynebacterium diphtheriae (strain ATCC 700971 / NCTC 13129 / Biotype gravis).